The sequence spans 304 residues: Acetylglutamate kinase (304 aa).

Residues 70–71, R92, and N185 contribute to the substrate site; that span reads GG.

The protein belongs to the acetylglutamate kinase family. ArgB subfamily.

The protein localises to the cytoplasm. The enzyme catalyses N-acetyl-L-glutamate + ATP = N-acetyl-L-glutamyl 5-phosphate + ADP. It participates in amino-acid biosynthesis; L-arginine biosynthesis; N(2)-acetyl-L-ornithine from L-glutamate: step 2/4. Functionally, catalyzes the ATP-dependent phosphorylation of N-acetyl-L-glutamate. The sequence is that of Acetylglutamate kinase from Paracoccus denitrificans (strain Pd 1222).